The following is a 147-amino-acid chain: Small ribosomal subunit protein uS12 (147 aa).

It belongs to the universal ribosomal protein uS12 family. In terms of assembly, part of the 30S ribosomal subunit.

In terms of biological role, with S4 and S5 plays an important role in translational accuracy. Located at the interface of the 30S and 50S subunits. In Methanococcus maripaludis (strain DSM 14266 / JCM 13030 / NBRC 101832 / S2 / LL), this protein is Small ribosomal subunit protein uS12.